Here is a 101-residue protein sequence, read N- to C-terminus: NAD(P)H-quinone oxidoreductase subunit 4L, chloroplastic (101 aa).

3 helical membrane-spanning segments follow: residues 2-22, 32-52, and 61-81; these read ILEHVLVLSAYLFSIGIYGLI, MCLELILNAVNINFVTFSDFF, and IFSIFVIAIAAAEAAIGLAIV.

This sequence belongs to the complex I subunit 4L family. NDH is composed of at least 16 different subunits, 5 of which are encoded in the nucleus.

Its subcellular location is the plastid. It is found in the chloroplast thylakoid membrane. The enzyme catalyses a plastoquinone + NADH + (n+1) H(+)(in) = a plastoquinol + NAD(+) + n H(+)(out). It catalyses the reaction a plastoquinone + NADPH + (n+1) H(+)(in) = a plastoquinol + NADP(+) + n H(+)(out). Functionally, NDH shuttles electrons from NAD(P)H:plastoquinone, via FMN and iron-sulfur (Fe-S) centers, to quinones in the photosynthetic chain and possibly in a chloroplast respiratory chain. The immediate electron acceptor for the enzyme in this species is believed to be plastoquinone. Couples the redox reaction to proton translocation, and thus conserves the redox energy in a proton gradient. The polypeptide is NAD(P)H-quinone oxidoreductase subunit 4L, chloroplastic (Eucalyptus globulus subsp. globulus (Tasmanian blue gum)).